Consider the following 175-residue polypeptide: Probable DNA-directed RNA polymerase subunit delta (175 aa).

Positions 14–81 constitute an HTH HARE-type domain; the sequence is MALVEIAHEI…SDQTWGLRSW (68 aa). The segment at 110-175 is disordered; that stretch reads LDLDEFEEVD…YDDEEEDRKD (66 aa).

Belongs to the RpoE family. In terms of assembly, RNAP is composed of a core of 2 alpha, a beta and a beta' subunits. The core is associated with a delta subunit and one of several sigma factors.

In terms of biological role, participates in both the initiation and recycling phases of transcription. In the presence of the delta subunit, RNAP displays an increased specificity of transcription, a decreased affinity for nucleic acids, and an increased efficiency of RNA synthesis because of enhanced recycling. The sequence is that of Probable DNA-directed RNA polymerase subunit delta from Bacillus velezensis (strain DSM 23117 / BGSC 10A6 / LMG 26770 / FZB42) (Bacillus amyloliquefaciens subsp. plantarum).